Here is an 800-residue protein sequence, read N- to C-terminus: Endonuclease MutS2 (800 aa).

336–343 (GPNTGGKT) contributes to the ATP binding site. In terms of domain architecture, Smr spans 725–800 (LDLRGVRYEA…GDGATIVELK (76 aa)).

The protein belongs to the DNA mismatch repair MutS family. MutS2 subfamily. As to quaternary structure, homodimer. Binds to stalled ribosomes, contacting rRNA.

Endonuclease that is involved in the suppression of homologous recombination and thus may have a key role in the control of bacterial genetic diversity. In terms of biological role, acts as a ribosome collision sensor, splitting the ribosome into its 2 subunits. Detects stalled/collided 70S ribosomes which it binds and splits by an ATP-hydrolysis driven conformational change. Acts upstream of the ribosome quality control system (RQC), a ribosome-associated complex that mediates the extraction of incompletely synthesized nascent chains from stalled ribosomes and their subsequent degradation. Probably generates substrates for RQC. The chain is Endonuclease MutS2 from Leuconostoc mesenteroides subsp. mesenteroides (strain ATCC 8293 / DSM 20343 / BCRC 11652 / CCM 1803 / JCM 6124 / NCDO 523 / NBRC 100496 / NCIMB 8023 / NCTC 12954 / NRRL B-1118 / 37Y).